Here is a 25-residue protein sequence, read N- to C-terminus: Omega-conotoxin CVIB (25 aa).

Disulfide bonds link C1/C16, C8/C20, and C15/C25. The residue at position 25 (C25) is a Cysteine amide.

Belongs to the conotoxin O1 superfamily. In terms of tissue distribution, expressed by the venom duct.

The protein localises to the secreted. Its function is as follows. Omega-conotoxins act at presynaptic membranes, they bind and block voltage-gated calcium channels (Cav). This toxin blocks N-, P- and Q-type calcium channels. It shows high activities on Cav2.1/CACNA1A (IC(50)=11 nM) and Cav2.2/CACNA1B (IC(50)=7.7 nM). In addition, it shows a higher potency when Cav2.2/CACNA1B is only expressed with the ancillary subunit CACNB3 (IC(50)=1.6 nM) than on Cav2.2/CACNA1B expressed with the ancillary subunits CACNA2D1 and CACNB3 (IC(50)=12 nM). Both the Cav2.2/CACNA1B block by this toxin and the recovery are voltage-independent. It is noteworthy that ancillary subunits beta do not modulate recovery from this toxin block, since Cav2.2/CACNA1B expressed with either the ancillary subunit CACNB2a (isoform 2a) or with CACNB3 exhibits moderate recovery. This is Omega-conotoxin CVIB from Conus catus (Cat cone).